Reading from the N-terminus, the 530-residue chain is Na(+)/H(+) antiporter NhaB (530 aa).

A run of 12 helical transmembrane segments spans residues phenylalanine 13–proline 33, leucine 34–phenylalanine 54, leucine 90–methionine 110, isoleucine 121–phenylalanine 141, phenylalanine 145–isoleucine 165, leucine 205–proline 225, phenylalanine 241–isoleucine 261, glycine 306–isoleucine 326, glutamate 351–isoleucine 371, leucine 393–glycine 413, glycine 455–tyrosine 475, and methionine 481–leucine 501.

Belongs to the NhaB Na(+)/H(+) (TC 2.A.34) antiporter family.

Its subcellular location is the cell inner membrane. It carries out the reaction 2 Na(+)(in) + 3 H(+)(out) = 2 Na(+)(out) + 3 H(+)(in). Its function is as follows. Na(+)/H(+) antiporter that extrudes sodium in exchange for external protons. The protein is Na(+)/H(+) antiporter NhaB of Aliivibrio fischeri (strain ATCC 700601 / ES114) (Vibrio fischeri).